Reading from the N-terminus, the 524-residue chain is NAD(P)H-quinone oxidoreductase chain 4, chloroplastic (524 aa).

Helical transmembrane passes span 4-24 (YPWL…IPLI), 31-51 (LIRW…TYVF), 87-107 (IALV…AWPV), 113-133 (LFYF…LAQD), 134-154 (LLLF…LLSM), 167-187 (FILY…TISL), 211-231 (ILVY…FPFH), 242-262 (HYST…YGFI), 275-295 (IFAP…ALVS), 308-328 (SSVS…DLGL), 330-350 (GAIL…FLAG), 386-406 (LALP…GIVA), 417-437 (IITC…LSMV), and 465-485 (VFII…PDLT).

The protein belongs to the complex I subunit 4 family.

The protein localises to the plastid. The protein resides in the chloroplast thylakoid membrane. The catalysed reaction is a plastoquinone + NADH + (n+1) H(+)(in) = a plastoquinol + NAD(+) + n H(+)(out). It carries out the reaction a plastoquinone + NADPH + (n+1) H(+)(in) = a plastoquinol + NADP(+) + n H(+)(out). This Staurastrum punctulatum (Green alga) protein is NAD(P)H-quinone oxidoreductase chain 4, chloroplastic.